The following is a 30-amino-acid chain: Acyl-CoA-binding protein 1 (30 aa).

Positions 1-15 are enriched in basic and acidic residues; the sequence is ALKDEFEEHAEKAKT. The tract at residues 1-30 is disordered; sequence ALKDEFEEHAEKAKTLPENTSNENKLILYG. The 29-residue stretch at 2–30 folds into the ACB domain; it reads LKDEFEEHAEKAKTLPENTSNENKLILYG.

The protein belongs to the ACBP family.

The protein resides in the cytoplasm. Functionally, binds medium- and long-chain acyl-CoA esters with very high affinity and may function as an intracellular carrier of acyl-CoA esters. This Digitalis lanata (Grecian foxglove) protein is Acyl-CoA-binding protein 1.